Reading from the N-terminus, the 419-residue chain is MHKVFASDFFNFEFLRLLGTVPFQGAEVGECLTTAGRIKDGDPESWYRAWRDQAEKAQALAEEAAAVGDRTGACWAYIRAANYWRASEFLLHCTPNDPRILAASKASVNAFDKGWVLLDATVKSFEIPYDKDIKLPGRLYLPAPHHRLPGKIPVVLQTGGFDSTQEELYFYGAAGALPRGYAVFSFDGPGQGLPLRVGKLKLRTDWEYVVSQVLDFVTDDIAPEYDLDLERLAIFGASLGGYLSLRAAVDPRIKACISCDGPLDLFEITRSRMPSWFINGWLSGWVSDGLFNWVVDALTAVNFQIAWEFGHGKWVFGVETPADVLRVMQQISLKGGYLSKIKCPTLITGAADSFYFTPDINANPIFEGLTALGSNEKHLWIGKGVEGGGLQAKIGALAVVHHKMFTWLDSTFAIKRDVL.

Serine 238 is a catalytic residue.

Belongs to the AB hydrolase superfamily. FUS2 hydrolase family.

The protein operates within mycotoxin biosynthesis. In terms of biological role, 20-hydroxy-prefusarin hydrolase; part of the gene cluster that mediates the biosynthesis of the mycotoxin fusarin C. Within the cluster, FUS1, FUS2, FUS8 and FUS9 are sufficient for fusarin production. The roles of the other FUS members are yet undetermined. The fusarin C synthetase FUS1 is responsible for the condensation of one acetyl-coenzyme A (CoA) unit with six malonyl-CoA units and the amide linkage of the arising heptaketide and homoserine, subsequently releasing the first intermediate, prefusarin, as an alcohol with an open ring structure. The cytochrome P450 monooxygenase FUS8 participates in multiple oxidation processes at carbon C-20 and is able to use the FUS1 product as substrate, resulting in formation of 20-hydroxy-prefusarin. This reaction seems to be essential before the 2-pyrrolidone ring closure can be catalyzed by FUS2, generating 20-hydroxy-fusarin. FUS8 is able to further oxidizes carbon C-20 after ring closure, resulting in the formation of carboxy-fusarin C. As the last step, FUS9 methylates the hydroxyl group at C-21 to generate fusarin C. Fusarin C can then rearrange to epi-fusarin C, the (z)-isomers, and fusarin A and fusarin D. In Gibberella moniliformis (strain M3125 / FGSC 7600) (Maize ear and stalk rot fungus), this protein is 20-hydroxy-prefusarin hydrolase FUS2.